The primary structure comprises 172 residues: uncharacterized protein (172 aa).

A compositionally biased stretch (low complexity) spans 1–28 (MAAAGVTAKAGGGTSAAAASLIRARSPA). Residues 1–172 (MAAAGVTAKA…GGRRSGRDAG (172 aa)) form a disordered region. The segment covering 58–68 (PRRRSRARRGH) has biased composition (basic residues). Residues 80–100 (TVGGEGQASQIGGGGGGGGGR) show a composition bias toward gly residues. Positions 129 to 138 (PGLASSPGVA) are enriched in low complexity. Gly residues predominate over residues 139–165 (PAGGSGGLWSGAGLCSGLGARGFPGGR).

This is an uncharacterized protein from Homo sapiens (Human).